The chain runs to 412 residues: Proteasome-activating nucleotidase (412 aa).

Residues 15 to 72 adopt a coiled-coil conformation; that stretch reads EDLYRYLLERVTNLEDRNTELREQLRQIEADKRYLETQKVRYEREVRKFKGEIEQMKS. ATP contacts are provided by residues 197–202 and H336; that span reads GTGKTL. The tract at residues 410–412 is docks into pockets in the proteasome alpha-ring to cause gate opening; the sequence is MFA.

This sequence belongs to the AAA ATPase family. In terms of assembly, homohexamer. The hexameric complex has a two-ring architecture resembling a top hat that caps the 20S proteasome core at one or both ends. Upon ATP-binding, the C-terminus of PAN interacts with the alpha-rings of the proteasome core by binding to the intersubunit pockets.

The protein resides in the cytoplasm. In terms of biological role, ATPase which is responsible for recognizing, binding, unfolding and translocation of substrate proteins into the archaeal 20S proteasome core particle. Is essential for opening the gate of the 20S proteasome via an interaction with its C-terminus, thereby allowing substrate entry and access to the site of proteolysis. Thus, the C-termini of the proteasomal ATPase function like a 'key in a lock' to induce gate opening and therefore regulate proteolysis. Unfolding activity requires energy from ATP hydrolysis, whereas ATP binding alone promotes ATPase-20S proteasome association which triggers gate opening, and supports translocation of unfolded substrates. This Methanosphaerula palustris (strain ATCC BAA-1556 / DSM 19958 / E1-9c) protein is Proteasome-activating nucleotidase.